The chain runs to 273 residues: Imidazole glycerol phosphate synthase subunit HisF (273 aa).

Catalysis depends on residues aspartate 12 and aspartate 136.

The protein belongs to the HisA/HisF family. Heterodimer of HisH and HisF.

The protein localises to the cytoplasm. It catalyses the reaction 5-[(5-phospho-1-deoxy-D-ribulos-1-ylimino)methylamino]-1-(5-phospho-beta-D-ribosyl)imidazole-4-carboxamide + L-glutamine = D-erythro-1-(imidazol-4-yl)glycerol 3-phosphate + 5-amino-1-(5-phospho-beta-D-ribosyl)imidazole-4-carboxamide + L-glutamate + H(+). Its pathway is amino-acid biosynthesis; L-histidine biosynthesis; L-histidine from 5-phospho-alpha-D-ribose 1-diphosphate: step 5/9. Functionally, IGPS catalyzes the conversion of PRFAR and glutamine to IGP, AICAR and glutamate. The HisF subunit catalyzes the cyclization activity that produces IGP and AICAR from PRFAR using the ammonia provided by the HisH subunit. The sequence is that of Imidazole glycerol phosphate synthase subunit HisF from Halobacterium salinarum (strain ATCC 29341 / DSM 671 / R1).